The chain runs to 221 residues: uncharacterized protein (221 aa).

The signal sequence occupies residues 1–18 (MKRFLLLIILFGISFSFV).

This is an uncharacterized protein from Aquifex aeolicus (strain VF5).